Consider the following 503-residue polypeptide: Probable cytosol aminopeptidase (503 aa).

Mn(2+)-binding residues include K270 and D275. K282 is a catalytic residue. D293, D352, and E354 together coordinate Mn(2+). R356 is a catalytic residue.

It belongs to the peptidase M17 family. It depends on Mn(2+) as a cofactor.

It is found in the cytoplasm. It catalyses the reaction Release of an N-terminal amino acid, Xaa-|-Yaa-, in which Xaa is preferably Leu, but may be other amino acids including Pro although not Arg or Lys, and Yaa may be Pro. Amino acid amides and methyl esters are also readily hydrolyzed, but rates on arylamides are exceedingly low.. It carries out the reaction Release of an N-terminal amino acid, preferentially leucine, but not glutamic or aspartic acids.. Its function is as follows. Presumably involved in the processing and regular turnover of intracellular proteins. Catalyzes the removal of unsubstituted N-terminal amino acids from various peptides. This chain is Probable cytosol aminopeptidase, found in Shigella dysenteriae serotype 1 (strain Sd197).